Consider the following 461-residue polypeptide: CASP-like protein 4U1 (461 aa).

A disordered region spans residues 1-239; the sequence is MASTPRTPAP…RAAETKLPLS (239 aa). At 1–314 the chain is on the cytoplasmic side; the sequence is MASTPRTPAP…AAVAVGERRE (314 aa). A compositionally biased stretch (pro residues) spans 7 to 69; it reads TPAPVRSPPP…PLETPPPPSP (63 aa). 2 stretches are compositionally biased toward low complexity: residues 116–126 and 135–155; these read LSPMRLAAPRL and TPTG…AAAG. Over residues 193-204 the composition is skewed to pro residues; that stretch reads SPSPSPTPPSPL. The span at 205 to 221 shows a compositional bias: low complexity; it reads TPAAAPVVNNNSNNKNN. Residues 315 to 335 traverse the membrane as a helical segment; sequence LSVTLRLATAVLSLAAFSVIA. At 336 to 354 the chain is on the extracellular side; it reads SARTSGWAGDYYAHHLQYR. The helical transmembrane segment at 355-375 threads the bilayer; the sequence is YAVAVNVIVCAYSIAQSFGEI. At 376 to 392 the chain is on the cytoplasmic side; sequence RRLISPRFIFRSMSSYY. A helical transmembrane segment spans residues 393–413; the sequence is CSLFLDQALAYLLMSASSAAA. Residues 414–431 lie on the Extracellular side of the membrane; it reads SRNDLWVSRFGTDAFNRK. Residues 432–452 form a helical membrane-spanning segment; sequence ITSALWLSFIAFLMLALNALI. Over 453 to 461 the chain is Cytoplasmic; sequence STANLFSML.

Belongs to the Casparian strip membrane proteins (CASP) family. In terms of assembly, homodimer and heterodimers.

It localises to the cell membrane. The polypeptide is CASP-like protein 4U1 (Sorghum bicolor (Sorghum)).